Consider the following 335-residue polypeptide: Glyceraldehyde-3-phosphate dehydrogenase 1 (335 aa).

NAD(+) contacts are provided by residues 13-14 (TI) and glycine 111. 140–142 (SCN) contacts D-glyceraldehyde 3-phosphate. Residue cysteine 141 is the Nucleophile of the active site. Position 169 (arginine 169) interacts with NAD(+). Residues threonine 171 and 195-196 (HG) each bind D-glyceraldehyde 3-phosphate. Glutamine 300 serves as a coordination point for NAD(+).

The protein belongs to the glyceraldehyde-3-phosphate dehydrogenase family. As to quaternary structure, homotetramer.

The protein localises to the cytoplasm. It carries out the reaction D-glyceraldehyde 3-phosphate + phosphate + NADP(+) = (2R)-3-phospho-glyceroyl phosphate + NADPH + H(+). It catalyses the reaction D-glyceraldehyde 3-phosphate + phosphate + NAD(+) = (2R)-3-phospho-glyceroyl phosphate + NADH + H(+). It participates in carbohydrate degradation; glycolysis; pyruvate from D-glyceraldehyde 3-phosphate: step 1/5. This chain is Glyceraldehyde-3-phosphate dehydrogenase 1 (gapA), found in Methanosarcina acetivorans (strain ATCC 35395 / DSM 2834 / JCM 12185 / C2A).